A 413-amino-acid chain; its full sequence is MAYEKLAVQDKAVLEGILAEKKRQQANIELIASENFVSEAVMEAQGSVLTNKYAEGYPGKRYYGGCEHVDVVEDIARDRVKEIFGAEYANVQPHSGAQANMAVYHTILEPGDTVLGMNLSHGGHLTHGSPVNFSGILYNFVEYGVTKDTQVIDYEDVRQKALEHKPKLIVAGASAYPREIDFSKFREIADEVGAYFMVDMAHIAGLVAVGEHQSPVPYADFVTSTTHKTLRGPRGGLILASKEWEQKLNKSVFPGIQGGPLMHVIAAKAVAFGEVLQPEFKDYAKQIKLNAKALAEVLIAEGVEIVSGGTDNHLLLLNVKSLGLTGKVAEHALDEVGITTNKNTIPYDTESPFVTSGIRIGTPAVTSRGFKEEDMKEVGAIIAAVLKNPEDEAVKADAKDRVKALTDKHPLYA.

(6S)-5,6,7,8-tetrahydrofolate-binding positions include Leu119 and 123-125; that span reads GHL. The residue at position 228 (Lys228) is an N6-(pyridoxal phosphate)lysine. 351 to 353 lines the (6S)-5,6,7,8-tetrahydrofolate pocket; it reads SPF.

Belongs to the SHMT family. Homodimer. It depends on pyridoxal 5'-phosphate as a cofactor.

It is found in the cytoplasm. The catalysed reaction is (6R)-5,10-methylene-5,6,7,8-tetrahydrofolate + glycine + H2O = (6S)-5,6,7,8-tetrahydrofolate + L-serine. Its pathway is one-carbon metabolism; tetrahydrofolate interconversion. It participates in amino-acid biosynthesis; glycine biosynthesis; glycine from L-serine: step 1/1. Functionally, catalyzes the reversible interconversion of serine and glycine with tetrahydrofolate (THF) serving as the one-carbon carrier. This reaction serves as the major source of one-carbon groups required for the biosynthesis of purines, thymidylate, methionine, and other important biomolecules. Also exhibits THF-independent aldolase activity toward beta-hydroxyamino acids, producing glycine and aldehydes, via a retro-aldol mechanism. This is Serine hydroxymethyltransferase from Lysinibacillus sphaericus (strain C3-41).